The chain runs to 261 residues: Taurine import ATP-binding protein TauB (261 aa).

Positions 4–233 (LQLERIGAQY…RYAAGESARA (230 aa)) constitute an ABC transporter domain. An ATP-binding site is contributed by 38–45 (GPSGSGKT).

The protein belongs to the ABC transporter superfamily. Taurine importer (TC 3.A.1.17.1) family. In terms of assembly, the complex is composed of two ATP-binding proteins (TauB), two transmembrane proteins (TauC) and a solute-binding protein (TauA).

The protein localises to the cell inner membrane. It carries out the reaction taurine(out) + ATP + H2O = taurine(in) + ADP + phosphate + H(+). Functionally, part of the ABC transporter complex TauABC involved in taurine import. Responsible for energy coupling to the transport system. This chain is Taurine import ATP-binding protein TauB, found in Pseudomonas savastanoi pv. phaseolicola (strain 1448A / Race 6) (Pseudomonas syringae pv. phaseolicola (strain 1448A / Race 6)).